Reading from the N-terminus, the 533-residue chain is Sterol 26-hydroxylase, mitochondrial (533 aa).

The transit peptide at 1-32 (MAVLSRMRLRWALLDTRVMGHGLCPQGARAKA) directs the protein to the mitochondrion. The interval 38–58 (LRDHESTEGPGTGQDRPRLRS) is disordered. Residues Lys-142 and Lys-375 each carry the N6-acetyllysine modification. Residues 386-400 (PLLKAVIKETLRLYP) form a sterol-binding region. Cys-479 serves as a coordination point for heme. N6-acetyllysine is present on residues Lys-512 and Lys-523.

This sequence belongs to the cytochrome P450 family. As to quaternary structure, interacts with HSP70; this interaction is required for initial targeting to mitochondria. Requires heme as cofactor. In terms of tissue distribution, expressed in liver, kidney and ovary.

It is found in the mitochondrion inner membrane. The enzyme catalyses 5beta-cholestane-3alpha,7alpha,12alpha-triol + 6 reduced [adrenodoxin] + 3 O2 + 5 H(+) = (25R)-3alpha,7alpha,12alpha-trihydroxy-5beta-cholestan-26-oate + 6 oxidized [adrenodoxin] + 4 H2O. It carries out the reaction cholestanol + 2 reduced [adrenodoxin] + O2 + 2 H(+) = (25R)-26-hydroxycholestanol + 2 oxidized [adrenodoxin] + H2O. The catalysed reaction is (25R)-3beta-hydroxycholest-5-en-7-one-26-al + 2 reduced [adrenodoxin] + O2 + H(+) = (25R)-3beta-hydroxycholest-5-en-7-one-26-oate + 2 oxidized [adrenodoxin] + H2O. It catalyses the reaction (25R)-3beta,26-dihydroxycholest-5-en-7-one + 2 reduced [adrenodoxin] + O2 + 2 H(+) = (25R)-3beta-hydroxycholest-5-en-7-one-26-al + 2 oxidized [adrenodoxin] + 2 H2O. The enzyme catalyses 7-oxocholesterol + 2 reduced [adrenodoxin] + O2 + 2 H(+) = (25R)-3beta,26-dihydroxycholest-5-en-7-one + 2 oxidized [adrenodoxin] + H2O. It carries out the reaction calciol + 2 reduced [adrenodoxin] + O2 + 2 H(+) = calcidiol + 2 oxidized [adrenodoxin] + H2O. The catalysed reaction is (25R)-5beta-cholestane-3alpha,7alpha,12alpha,26-tetrol + 2 reduced [adrenodoxin] + O2 + 2 H(+) = (25R)-3alpha,7alpha,12alpha-trihydroxy-5beta-cholestan-26-al + 2 oxidized [adrenodoxin] + 2 H2O. It catalyses the reaction 2 reduced [adrenodoxin] + cholesterol + O2 + 2 H(+) = (25R)-cholest-5-ene-3beta,26-diol + 2 oxidized [adrenodoxin] + H2O. The enzyme catalyses (25R)-3beta,4beta-dihydroxycholest-5-en-26-al + 2 reduced [adrenodoxin] + O2 + H(+) = (25R)-3beta,4beta-dihydroxycholest-5-en-26-oate + 2 oxidized [adrenodoxin] + H2O. It carries out the reaction (25R)-4beta,26-dihydroxycholesterol + 2 reduced [adrenodoxin] + O2 + 2 H(+) = (25R)-3beta,4beta-dihydroxycholest-5-en-26-al + 2 oxidized [adrenodoxin] + 2 H2O. The catalysed reaction is 4beta-hydroxycholesterol + 2 reduced [adrenodoxin] + O2 + 2 H(+) = (25R)-4beta,26-dihydroxycholesterol + 2 oxidized [adrenodoxin] + H2O. It catalyses the reaction (25R)-3beta-hydroxy-5-cholesten-26-al + 2 reduced [adrenodoxin] + O2 + H(+) = (25R)-3beta-hydroxy-5-cholestenoate + 2 oxidized [adrenodoxin] + H2O. The enzyme catalyses (25R)-cholest-5-ene-3beta,26-diol + 2 reduced [adrenodoxin] + O2 + 2 H(+) = (25R)-3beta-hydroxy-5-cholesten-26-al + 2 oxidized [adrenodoxin] + 2 H2O. It carries out the reaction (25R)-3alpha,7alpha,12alpha-trihydroxy-5beta-cholestan-26-al + 2 reduced [adrenodoxin] + O2 + H(+) = (25R)-3alpha,7alpha,12alpha-trihydroxy-5beta-cholestan-26-oate + 2 oxidized [adrenodoxin] + H2O. The catalysed reaction is 5beta-cholestane-3alpha,7alpha,12alpha-triol + 2 reduced [adrenodoxin] + O2 + 2 H(+) = (25R)-5beta-cholestane-3alpha,7alpha,12alpha,26-tetrol + 2 oxidized [adrenodoxin] + H2O. The protein operates within hormone biosynthesis; cholecalciferol biosynthesis. It functions in the pathway steroid metabolism; cholesterol degradation. It participates in lipid metabolism; bile acid biosynthesis. Functionally, cytochrome P450 monooxygenase that catalyzes regio- and stereospecific hydroxylation of cholesterol and its derivatives. Hydroxylates (with R stereochemistry) the terminal methyl group of cholesterol side-chain in a three step reaction to yield at first a C26 alcohol, then a C26 aldehyde and finally a C26 acid. Regulates cholesterol homeostasis by catalyzing the conversion of excess cholesterol to bile acids via both the 'neutral' (classic) and the 'acid' (alternative) pathways. May also regulate cholesterol homeostasis via generation of active oxysterols, which act as ligands for NR1H2 and NR1H3 nuclear receptors, modulating the transcription of genes involved in lipid metabolism. Plays a role in cholestanol metabolism in the cerebellum. Similarly to cholesterol, hydroxylates cholestanol and may facilitate sterol diffusion through the blood-brain barrier to the systemic circulation for further degradation. Also hydroxylates retinal 7-ketocholesterol, a noxious oxysterol with pro-inflammatory and pro-apoptotic effects, and may play a role in its elimination from the retinal pigment epithelium. May play a redundant role in vitamin D biosynthesis. Catalyzes 25-hydroxylation of vitamin D3 that is required for its conversion to a functionally active form. This Rattus norvegicus (Rat) protein is Sterol 26-hydroxylase, mitochondrial (Cyp27a1).